A 523-amino-acid chain; its full sequence is GMP synthase [glutamine-hydrolyzing] (523 aa).

Positions 8 to 205 (KILILDFGSQ…VVNICGCETK (198 aa)) constitute a Glutamine amidotransferase type-1 domain. Residue Cys-85 is the Nucleophile of the active site. Catalysis depends on residues His-179 and Glu-181. Residues 206-398 (WTAENIIEDA…LGLPAEMINR (193 aa)) form the GMPS ATP-PPase domain. An ATP-binding site is contributed by 233–239 (SGGVDSS).

As to quaternary structure, homodimer.

It catalyses the reaction XMP + L-glutamine + ATP + H2O = GMP + L-glutamate + AMP + diphosphate + 2 H(+). The protein operates within purine metabolism; GMP biosynthesis; GMP from XMP (L-Gln route): step 1/1. Catalyzes the synthesis of GMP from XMP. The protein is GMP synthase [glutamine-hydrolyzing] of Haemophilus influenzae (strain PittEE).